The primary structure comprises 366 residues: 1-aminocyclopropane-1-carboxylate oxidase homolog 12 (366 aa).

The 100-residue stretch at 215 to 314 folds into the Fe2OG dioxygenase domain; the sequence is KTLLMICHYY…RISVASFFSS (100 aa). Residues His-239, Asp-241, and His-295 each contribute to the Fe cation site. Residue Arg-305 participates in 2-oxoglutarate binding.

The protein belongs to the iron/ascorbate-dependent oxidoreductase family. The cofactor is Fe(2+).

The polypeptide is 1-aminocyclopropane-1-carboxylate oxidase homolog 12 (Arabidopsis thaliana (Mouse-ear cress)).